Consider the following 774-residue polypeptide: 1,4-alpha-glucan branching enzyme GlgB 1 (774 aa).

The tract at residues 1-66 (MTPRPSSSGP…AEVAVSPAPD (66 aa)) is disordered. A compositionally biased stretch (basic residues) spans 29–40 (KPAKAAKKKAPR). Low complexity predominate over residues 41–55 (RTTASANASATTSVS). Catalysis depends on Asp-457, which acts as the Nucleophile. The Proton donor role is filled by Glu-510. Positions 748-774 (YGGGDVVNPDPVKPEPQGGTAARRASG) are disordered.

This sequence belongs to the glycosyl hydrolase 13 family. GlgB subfamily. Monomer.

It catalyses the reaction Transfers a segment of a (1-&gt;4)-alpha-D-glucan chain to a primary hydroxy group in a similar glucan chain.. It functions in the pathway glycan biosynthesis; glycogen biosynthesis. Catalyzes the formation of the alpha-1,6-glucosidic linkages in glycogen by scission of a 1,4-alpha-linked oligosaccharide from growing alpha-1,4-glucan chains and the subsequent attachment of the oligosaccharide to the alpha-1,6 position. In Streptomyces coelicolor (strain ATCC BAA-471 / A3(2) / M145), this protein is 1,4-alpha-glucan branching enzyme GlgB 1 (glgB1).